We begin with the raw amino-acid sequence, 696 residues long: SEC14 domain and spectrin repeat-containing protein 1 (696 aa).

Residues 1 to 153 (MDATVILPIL…EFGGSLTYDH (153 aa)) form the CRAL-TRIO domain. 3 Spectrin repeats span residues 272–378 (TQLD…NLLQ), 381–494 (LDFH…LKML), and 500–602 (FKCE…HRLE).

It belongs to the SOLO family.

In terms of biological role, may act as the primary docking protein directing membrane turnover and assembly of the transient receptor potential channels trpc4 and trpc5. Binds phospholipids. The chain is SEC14 domain and spectrin repeat-containing protein 1 (sestd1) from Xenopus tropicalis (Western clawed frog).